The primary structure comprises 950 residues: Leucine--tRNA ligase (950 aa).

A 'HIGH' region motif is present at residues 72–83 (PYPSGEGLHVGH). The 'KMSKS' region signature appears at 722 to 726 (KIGKS). An ATP-binding site is contributed by K725.

This sequence belongs to the class-I aminoacyl-tRNA synthetase family.

The protein resides in the cytoplasm. The catalysed reaction is tRNA(Leu) + L-leucine + ATP = L-leucyl-tRNA(Leu) + AMP + diphosphate. The polypeptide is Leucine--tRNA ligase (Mycobacterium sp. (strain JLS)).